The sequence spans 260 residues: MAEGKVDPVHQFTIETLFGTDHWSIGGYNIAFTNSALWMAITTAVLIVFVAGGAKRELVPGRWQMAVEGLTGFVDNLLQANIGKAGRKYLPYVFSLFAFILFANMLGLLPLALVGVHPFTATSHFTVTGVLAIMSFAIVLGVGFAKHGLHFFSLFVPHGTPVPMIPIIFPIELISFMVRPFSLGLRLFVAMMAGHVLLEVLSGFVISGTNAGVGTFFLAAVPSFLLMIGICALELLVAGIQAYVFALLTCVYLNDAENLH.

7 consecutive transmembrane segments (helical) span residues 30–50 (IAFTNSALWMAITTAVLIVFV), 96–116 (LFAFILFANMLGLLPLALVGV), 125–145 (FTVTGVLAIMSFAIVLGVGFA), 151–171 (FFSLFVPHGTPVPMIPIIFPI), 187–207 (LFVAMMAGHVLLEVLSGFVIS), 213–233 (VGTFFLAAVPSFLLMIGICAL), and 234–254 (ELLVAGIQAYVFALLTCVYLN).

It belongs to the ATPase A chain family. F-type ATPases have 2 components, CF(1) - the catalytic core - and CF(0) - the membrane proton channel. CF(1) has five subunits: alpha(3), beta(3), gamma(1), delta(1), epsilon(1). CF(0) has three main subunits: a(1), b(2) and c(9-12). The alpha and beta chains form an alternating ring which encloses part of the gamma chain. CF(1) is attached to CF(0) by a central stalk formed by the gamma and epsilon chains, while a peripheral stalk is formed by the delta and b chains.

The protein resides in the cell inner membrane. In terms of biological role, key component of the proton channel; it plays a direct role in the translocation of protons across the membrane. The sequence is that of ATP synthase subunit a from Novosphingobium aromaticivorans (strain ATCC 700278 / DSM 12444 / CCUG 56034 / CIP 105152 / NBRC 16084 / F199).